The chain runs to 71 residues: ATP synthase F(0) complex subunit e, mitochondrial (71 aa).

An N6-acetyllysine modification is found at Lys-34.

This sequence belongs to the ATPase e subunit family. As to quaternary structure, component of the ATP synthase complex composed at least of ATP5F1A/subunit alpha, ATP5F1B/subunit beta, ATP5MC1/subunit c (homooctomer), MT-ATP6/subunit a, MT-ATP8/subunit 8, ATP5ME/subunit e, ATP5MF/subunit f, ATP5MG/subunit g, ATP5MK/subunit k, ATP5MJ/subunit j, ATP5F1C/subunit gamma, ATP5F1D/subunit delta, ATP5F1E/subunit epsilon, ATP5PF/subunit F6, ATP5PB/subunit b, ATP5PD/subunit d, ATP5PO/subunit OSCP. ATP synthase complex consists of a soluble F(1) head domain (subunits alpha(3) and beta(3)) - the catalytic core - and a membrane F(0) domain - the membrane proton channel (subunits c, a, 8, e, f, g, k and j). These two domains are linked by a central stalk (subunits gamma, delta, and epsilon) rotating inside the F1 region and a stationary peripheral stalk (subunits F6, b, d, and OSCP).

It localises to the mitochondrion. It is found in the mitochondrion inner membrane. Its function is as follows. Subunit e, of the mitochondrial membrane ATP synthase complex (F(1)F(0) ATP synthase or Complex V) that produces ATP from ADP in the presence of a proton gradient across the membrane which is generated by electron transport complexes of the respiratory chain. ATP synthase complex consist of a soluble F(1) head domain - the catalytic core - and a membrane F(1) domain - the membrane proton channel. These two domains are linked by a central stalk rotating inside the F(1) region and a stationary peripheral stalk. During catalysis, ATP synthesis in the catalytic domain of F(1) is coupled via a rotary mechanism of the central stalk subunits to proton translocation. In vivo, can only synthesize ATP although its ATP hydrolase activity can be activated artificially in vitro. Part of the complex F(0) domain. In Bos taurus (Bovine), this protein is ATP synthase F(0) complex subunit e, mitochondrial.